The following is a 500-amino-acid chain: Sodium/potassium/calcium exchanger 5 (500 aa).

Residues 1-29 form the signal peptide; the sequence is MQTKGGQTWARRALLLGILWATAHLPLSG. At 30 to 66 the chain is on the extracellular side; that stretch reads TSLPQRLPRATGNSTQCVISPSSEFPEGFFTRQERRD. A helical transmembrane segment spans residues 67 to 87; that stretch reads GGIIIYFLIIVYMFMAISIVC. Over 88–111 the chain is Cytoplasmic; it reads DEYFLPSLEIISESLGLSQDVAGT. A helical membrane pass occupies residues 112–132; sequence TFMAAGSSAPELVTAFLGVFI. Over 133 to 136 the chain is Extracellular; it reads TKGD. A helical transmembrane segment spans residues 137 to 157; sequence IGISTILGSAIYNLLGICAAC. The Cytoplasmic segment spans residues 158-169; the sequence is GLLSNTVSTLSC. The helical transmembrane segment at 170 to 190 threads the bilayer; sequence WPLFRDCAAYTISAAAVLGII. Residues 191–195 are Extracellular-facing; sequence YDNQV. The chain crosses the membrane as a helical span at residues 196 to 216; that stretch reads YWYEGALLLLIYGLYVLVLCF. At 217–302 the chain is on the cytoplasmic side; it reads DIKINQYIIK…PSVFNMPEAD (86 aa). A helical membrane pass occupies residues 303–323; the sequence is LKRIFWVLSLPIITLLFLTTP. At 324 to 333 the chain is on the extracellular side; sequence DCRKKFWKNY. Residues 334 to 354 traverse the membrane as a helical segment; sequence FVITFFMSAIWISAFTYILVW. Over 355-368 the chain is Cytoplasmic; it reads MVTITGETLEIPDT. Residues 369-389 traverse the membrane as a helical segment; that stretch reads VMGLTLLAAGTSIPDTIASVL. Residues 390-399 are Extracellular-facing; the sequence is VARKGKGDMA. The helical transmembrane segment at 400 to 420 threads the bilayer; it reads MSNIVGSNVFDMLCLGIPWFI. At 421–437 the chain is on the cytoplasmic side; sequence KTAFINGSAPAEVNSRG. Residues 438–458 traverse the membrane as a helical segment; sequence LTYITISLNISIIFLFLAVHF. Topologically, residues 459-468 are extracellular; the sequence is NGWKLDRKLG. A helical membrane pass occupies residues 469–489; that stretch reads IVCLLSYLGLATLSVLYELGI. Over 490-500 the chain is Cytoplasmic; that stretch reads IGNNKIRGCGG.

Belongs to the Ca(2+):cation antiporter (CaCA) (TC 2.A.19) family. SLC24A subfamily.

It is found in the golgi apparatus. The protein localises to the trans-Golgi network membrane. The protein resides in the melanosome. The catalysed reaction is Ca(2+)(out) + K(+)(out) + 4 Na(+)(in) = Ca(2+)(in) + K(+)(in) + 4 Na(+)(out). Calcium, potassium:sodium antiporter that transports 1 Ca(2+) and 1 K(+) to the melanosome in exchange for 4 cytoplasmic Na(+). Involved in pigmentation, possibly by participating in ion transport in melanosomes. Predominant sodium-calcium exchanger in melanocytes. This is Sodium/potassium/calcium exchanger 5 from Homo sapiens (Human).